Reading from the N-terminus, the 364-residue chain is Aminomethyltransferase (364 aa).

The protein belongs to the GcvT family. In terms of assembly, the glycine cleavage system is composed of four proteins: P, T, L and H.

The enzyme catalyses N(6)-[(R)-S(8)-aminomethyldihydrolipoyl]-L-lysyl-[protein] + (6S)-5,6,7,8-tetrahydrofolate = N(6)-[(R)-dihydrolipoyl]-L-lysyl-[protein] + (6R)-5,10-methylene-5,6,7,8-tetrahydrofolate + NH4(+). The glycine cleavage system catalyzes the degradation of glycine. This is Aminomethyltransferase from Escherichia coli (strain 55989 / EAEC).